The chain runs to 306 residues: Mitochondrial substrate carrier family protein M (306 aa).

At 1–10 (MRYILNNNVE) the chain is on the mitochondrial intermembrane side. Solcar repeat units lie at residues 5–98 (LNNN…YKNI), 108–195 (LNTF…IKFY), and 207–299 (LNAS…IKKS). The helical transmembrane segment at 11 to 31 (GTSALLGSTVATAFLQPFDFL) threads the bilayer. Over 32–72 (KIRLQGSGFASGGDLNKFKRVGVIDTCKNVLKNEGIKQFWR) the chain is Mitochondrial matrix. The helical transmembrane segment at 73–89 (GSSPTIVASGIAWGTYM) threads the bilayer. At 90-113 (HFYEAYKNILKSKYNVTQLNTFDH) the chain is on the mitochondrial intermembrane side. Residues 114–134 (FICAVGASATQVFITNPIFLI) traverse the membrane as a helical segment. At 135–163 (KTRMQLQTPGSANYYTGIFDGIKKTVKVE) the chain is on the mitochondrial matrix side. The chain crosses the membrane as a helical span at residues 164–184 (GFKGLYKGVIPSLWLTFHGGI). Over 185-211 (QMSSYEHIKFYFSSNSGKSLDSLNASE) the chain is Mitochondrial intermembrane. The chain crosses the membrane as a helical span at residues 212 to 232 (IFIASSISKFLASTILYPFQV). The Mitochondrial matrix portion of the chain corresponds to 233–278 (VKTRLQDERNIPNQNNVRVYNGTKDVIFKILKNEGIIGFYRGLVPN). The chain crosses the membrane as a helical span at residues 279-296 (TLKVIPNTSITLLLYEEI). Topologically, residues 297–306 (KKSFNYIINE) are mitochondrial intermembrane.

Belongs to the mitochondrial carrier (TC 2.A.29) family.

It is found in the mitochondrion inner membrane. Its function is as follows. Mitochondrial solute carriers shuttle metabolites, nucleotides, and cofactors through the mitochondrial inner membrane. Transports folate across the inner membranes of mitochondria. This chain is Mitochondrial substrate carrier family protein M (mcfM), found in Dictyostelium discoideum (Social amoeba).